The following is a 436-amino-acid chain: Glutamyl-tRNA reductase (436 aa).

Substrate is bound by residues 52–55 (TCHR), S105, 110–112 (EDQ), and Q116. C53 (nucleophile) is an active-site residue. 184–189 (GAGEMG) is a binding site for NADP(+).

The protein belongs to the glutamyl-tRNA reductase family. Homodimer.

The catalysed reaction is (S)-4-amino-5-oxopentanoate + tRNA(Glu) + NADP(+) = L-glutamyl-tRNA(Glu) + NADPH + H(+). It participates in porphyrin-containing compound metabolism; protoporphyrin-IX biosynthesis; 5-aminolevulinate from L-glutamyl-tRNA(Glu): step 1/2. Its function is as follows. Catalyzes the NADPH-dependent reduction of glutamyl-tRNA(Glu) to glutamate 1-semialdehyde (GSA). This Halobacterium salinarum (strain ATCC 29341 / DSM 671 / R1) protein is Glutamyl-tRNA reductase.